An 89-amino-acid chain; its full sequence is Small ribosomal subunit protein bS18 (89 aa).

Residues 1–15 (MTTANTNETAAAAAA) are compositionally biased toward low complexity. Residues 1 to 22 (MTTANTNETAAAAAAKNRRNKK) are disordered.

It belongs to the bacterial ribosomal protein bS18 family. Part of the 30S ribosomal subunit. Forms a tight heterodimer with protein bS6.

Its function is as follows. Binds as a heterodimer with protein bS6 to the central domain of the 16S rRNA, where it helps stabilize the platform of the 30S subunit. The polypeptide is Small ribosomal subunit protein bS18 (Caldanaerobacter subterraneus subsp. tengcongensis (strain DSM 15242 / JCM 11007 / NBRC 100824 / MB4) (Thermoanaerobacter tengcongensis)).